Reading from the N-terminus, the 506-residue chain is ATP synthase subunit alpha (506 aa).

169-176 (GDRGTGKT) contributes to the ATP binding site.

The protein belongs to the ATPase alpha/beta chains family. As to quaternary structure, F-type ATPases have 2 components, CF(1) - the catalytic core - and CF(0) - the membrane proton channel. CF(1) has five subunits: alpha(3), beta(3), gamma(1), delta(1), epsilon(1). CF(0) has three main subunits: a(1), b(2) and c(9-12). The alpha and beta chains form an alternating ring which encloses part of the gamma chain. CF(1) is attached to CF(0) by a central stalk formed by the gamma and epsilon chains, while a peripheral stalk is formed by the delta and b chains.

The protein resides in the cell membrane. The enzyme catalyses ATP + H2O + 4 H(+)(in) = ADP + phosphate + 5 H(+)(out). Functionally, produces ATP from ADP in the presence of a proton gradient across the membrane. The alpha chain is a regulatory subunit. This chain is ATP synthase subunit alpha, found in Symbiobacterium thermophilum (strain DSM 24528 / JCM 14929 / IAM 14863 / T).